The sequence spans 41 residues: MKKLIMALVILGALGTSYISADSSIQQASGDYEVAGMPRGA.

An N-terminal signal peptide occupies residues 1 to 21; it reads MKKLIMALVILGALGTSYISA.

Interacts with the viral AimR transcriptional regulator; this interaction changes the oligomeric state of AimR from an active dimer to an inactive monomer leading to lysogeny. Cleaved by host extracellular proteases, thereby releasing the mature arbitrium peptide.

It localises to the secreted. Its function is as follows. Part of the latency-replication switch system which decides at the onset of infection whether to replicate and lyse the host or to lysogenize (latency) and keep the host viable. Functionally, peptide which is released by the infected host bacteria and acts as a communication agent that affects the latency versus replication (lysogeny-lysis) decision for any new infecting virus from the same specie. High concentration of arbitrium peptide results in increased lysogeny in the upcoming viruses. The arbitrium peptide is secreted by infected bacteria and, after several cycles of infection, accumulates in the extracellular medium. When a virus from the same specie subsequently infects an uninfected bacterium which has internalized the peptide via its OPP transporter, the peptide will binds to the viral AimR transcriptional regulator and prevents AimR transcriptional activation of the aimX locus. Inhibition of aimX transcription promotes lysogeny. The sequence is that of Protein AimP from Bacillus phage SPbeta (Bacillus phage SPBc2).